The primary structure comprises 716 residues: Forkhead box protein P2 (716 aa).

The segment covering 1–28 (MMQESATETISNSSMNQNGMSTLSSQLD) has biased composition (polar residues). Disordered regions lie at residues 1–45 (MMQE…SEVS) and 286–340 (KHGG…TGAS). Low complexity predominate over residues 293-306 (TTNNSSSTTSSTTS). Over residues 316-325 (SIVNGQSSVL) the composition is skewed to polar residues. The segment covering 327-338 (ARRDSSSHEETG) has biased composition (basic and acidic residues). Residues 347 to 372 (GVCKWPGCESICEDFGQFLKHLNNEH) form a C2H2-type zinc finger. Residues 389-410 (VQQLEIQLSKERERLQAMMTHL) are leucine-zipper. Residues 423–427 (PLNLV) are CTBP1-binding. The segment covering 439–460 (TSPQSLPQTPTTPTAPVTPITQ) has biased composition (low complexity). The interval 439-466 (TSPQSLPQTPTTPTAPVTPITQGPSVIT) is disordered. A DNA-binding region (fork-head) is located at residues 505–595 (RPPFTYATLI…SQKITGSPTL (91 aa)). Disordered stretches follow at residues 650-669 (LDHI…QPHI) and 679-716 (VIAE…EDLE). Acidic residues predominate over residues 700–716 (LEDDREIEEEPLSEDLE).

In terms of assembly, forms homodimers and heterodimers with FOXP1 and FOXP4. Dimerization is required for DNA-binding. Interacts with CTBP1. Interacts with FOXP1. Interacts with TBR1. Interacts with ZMYM2.

The protein localises to the nucleus. Its function is as follows. Transcriptional repressor that may play a role in the specification and differentiation of lung epithelium. May also play a role in developing neural, gastrointestinal and cardiovascular tissues. Can act with CTBP1 to synergistically repress transcription but CTPBP1 is not essential. Plays a role in synapse formation by regulating SRPX2 levels. The sequence is that of Forkhead box protein P2 (FOXP2) from Pan paniscus (Pygmy chimpanzee).